Consider the following 315-residue polypeptide: Ribosomal RNA small subunit methyltransferase H (315 aa).

Residues 35 to 37 (GGH), aspartate 55, phenylalanine 80, aspartate 102, and glutamine 109 each bind S-adenosyl-L-methionine.

Belongs to the methyltransferase superfamily. RsmH family.

The protein localises to the cytoplasm. The catalysed reaction is cytidine(1402) in 16S rRNA + S-adenosyl-L-methionine = N(4)-methylcytidine(1402) in 16S rRNA + S-adenosyl-L-homocysteine + H(+). Specifically methylates the N4 position of cytidine in position 1402 (C1402) of 16S rRNA. This is Ribosomal RNA small subunit methyltransferase H from Shewanella halifaxensis (strain HAW-EB4).